Reading from the N-terminus, the 381-residue chain is Creatine kinase B-type (381 aa).

The residue at position 4 (Ser4) is a Phosphoserine. Positions 11-98 constitute a Phosphagen kinase N-terminal domain; the sequence is KLRFPAEDEF…FDPIIEDRHG (88 aa). Thr35 is modified (phosphothreonine). Lys45 is covalently cross-linked (Glycyl lysine isopeptide (Lys-Gly) (interchain with G-Cter in ubiquitin)). Residue Val72 participates in creatine binding. The segment covering 96 to 110 has biased composition (basic and acidic residues); that stretch reads RHGGYKPSDEHKTDL. The segment at 96–123 is disordered; that stretch reads RHGGYKPSDEHKTDLNPDNLQGGDDLDP. Glycyl lysine isopeptide (Lys-Gly) (interchain with G-Cter in ubiquitin) cross-links involve residues Lys101 and Lys107. Tyr125 is modified (phosphotyrosine). The region spanning 125 to 367 is the Phosphagen kinase C-terminal domain; that stretch reads YVLSSRVRTG…KLLIEMEQRL (243 aa). Residues 128-132, Arg130, Arg132, and His191 contribute to the ATP site; that span reads SSRVR. Residues 130 to 138 form an internal MTS-like signal region; sequence RVRTGRSIR. Phosphoserine is present on Ser199. Glu232 contributes to the creatine binding site. An ATP-binding site is contributed by Arg236. Tyr269 is modified (3'-nitrotyrosine). Ser285 is a binding site for creatine. ATP-binding positions include Arg292, Arg320, 320-325, and Asp335; that span reads RGTGGV. Thr322 is modified (phosphothreonine). A Glycyl lysine isopeptide (Lys-Gly) (interchain with G-Cter in ubiquitin) cross-link involves residue Lys381.

This sequence belongs to the ATP:guanido phosphotransferase family. As to quaternary structure, dimer of identical or non-identical chains, which can be either B (brain type) or M (muscle type). With MM being the major form in skeletal muscle and myocardium, MB existing in myocardium, and BB existing in many tissues, especially brain. Interacts with SLC12A6 (via C-terminus); the interaction may be required for SLC12A6 potassium-chloride cotransport activity. Ubiquitinated by the ECS(ASB9) complex, leading to its degradation by the proteasome.

The protein localises to the cytoplasm. The protein resides in the cytosol. Its subcellular location is the mitochondrion. It localises to the cell membrane. It catalyses the reaction creatine + ATP = N-phosphocreatine + ADP + H(+). Its function is as follows. Reversibly catalyzes the transfer of phosphate between ATP and various phosphogens (e.g. creatine phosphate). Creatine kinase isoenzymes play a central role in energy transduction in tissues with large, fluctuating energy demands, such as skeletal muscle, heart, brain and spermatozoa. Acts as a key regulator of adaptive thermogenesis as part of the futile creatine cycle: localizes to the mitochondria of thermogenic fat cells and acts by mediating phosphorylation of creatine to initiate a futile cycle of creatine phosphorylation and dephosphorylation. During the futile creatine cycle, creatine and N-phosphocreatine are in a futile cycle, which dissipates the high energy charge of N-phosphocreatine as heat without performing any mechanical or chemical work. The sequence is that of Creatine kinase B-type (CKB) from Canis lupus familiaris (Dog).